The primary structure comprises 476 residues: Glycogen synthase (476 aa).

Lys-15 lines the ADP-alpha-D-glucose pocket.

This sequence belongs to the glycosyltransferase 1 family. Bacterial/plant glycogen synthase subfamily.

The enzyme catalyses [(1-&gt;4)-alpha-D-glucosyl](n) + ADP-alpha-D-glucose = [(1-&gt;4)-alpha-D-glucosyl](n+1) + ADP + H(+). Its pathway is glycan biosynthesis; glycogen biosynthesis. In terms of biological role, synthesizes alpha-1,4-glucan chains using ADP-glucose. The protein is Glycogen synthase of Halalkalibacterium halodurans (strain ATCC BAA-125 / DSM 18197 / FERM 7344 / JCM 9153 / C-125) (Bacillus halodurans).